The chain runs to 445 residues: Tryptamine benzoyltransferase 1 (445 aa).

Catalysis depends on proton acceptor residues H150 and D382.

This sequence belongs to the plant acyltransferase family.

Its function is as follows. Hydroxycinnamoyl transferase that catalyzes the transfer of an acyl from benzoyl-CoA to tryptamine, to produce benzoyl tryptamine. Serotonin and tyramine serve as acyl acceptors in vitro. Can use p-coumaroyl-CoA, and to a lesser extent caffeoyl-CoA, as acyl donors. In Oryza sativa subsp. japonica (Rice), this protein is Tryptamine benzoyltransferase 1.